Reading from the N-terminus, the 138-residue chain is NADH dehydrogenase [ubiquinone] 1 alpha subcomplex subunit N7BM (138 aa).

The protein belongs to the complex I NDUFA12 subunit family. Complex I is composed of 42 different subunits.

Its subcellular location is the mitochondrion inner membrane. Functionally, accessory subunit of the mitochondrial membrane respiratory chain NADH dehydrogenase (Complex I), that is believed not to be involved in catalysis. Complex I functions in the transfer of electrons from NADH to the respiratory chain. The immediate electron acceptor for the enzyme is believed to be ubiquinone. The chain is NADH dehydrogenase [ubiquinone] 1 alpha subcomplex subunit N7BM from Yarrowia lipolytica (strain CLIB 122 / E 150) (Yeast).